Consider the following 127-residue polypeptide: Aspartate 1-decarboxylase (127 aa).

Residue Ser25 is the Schiff-base intermediate with substrate; via pyruvic acid of the active site. Ser25 carries the pyruvic acid (Ser) modification. Substrate is bound at residue Thr57. Residue Tyr58 is the Proton donor of the active site. Residue 73 to 75 (GAA) coordinates substrate.

Belongs to the PanD family. In terms of assembly, heterooctamer of four alpha and four beta subunits. It depends on pyruvate as a cofactor. In terms of processing, is synthesized initially as an inactive proenzyme, which is activated by self-cleavage at a specific serine bond to produce a beta-subunit with a hydroxyl group at its C-terminus and an alpha-subunit with a pyruvoyl group at its N-terminus.

Its subcellular location is the cytoplasm. The enzyme catalyses L-aspartate + H(+) = beta-alanine + CO2. It participates in cofactor biosynthesis; (R)-pantothenate biosynthesis; beta-alanine from L-aspartate: step 1/1. Functionally, catalyzes the pyruvoyl-dependent decarboxylation of aspartate to produce beta-alanine. The polypeptide is Aspartate 1-decarboxylase (Listeria welshimeri serovar 6b (strain ATCC 35897 / DSM 20650 / CCUG 15529 / CIP 8149 / NCTC 11857 / SLCC 5334 / V8)).